A 157-amino-acid polypeptide reads, in one-letter code: Small ribosomal subunit protein uS7 (157 aa).

The protein belongs to the universal ribosomal protein uS7 family. Part of the 30S ribosomal subunit. Contacts proteins S9 and S11.

Functionally, one of the primary rRNA binding proteins, it binds directly to 16S rRNA where it nucleates assembly of the head domain of the 30S subunit. Is located at the subunit interface close to the decoding center, probably blocks exit of the E-site tRNA. The polypeptide is Small ribosomal subunit protein uS7 (Leptospira interrogans serogroup Icterohaemorrhagiae serovar copenhageni (strain Fiocruz L1-130)).